The sequence spans 1388 residues: Peroxisomal ATPase PEX6 (1388 aa).

Disordered stretches follow at residues 1–29 (MTTSELVPPPPARRSPRTRRRRQDKPALS), 169–192 (EGTFFRDRPNKGKGKAPAQPDTPE), 262–287 (RGQSAPAIPPNRSLNGVPEDDEDDTA), 302–323 (DAATTEMDTVTETEESDLSGVD), and 346–365 (TTASGVSTMQPGTPMTIGRG). The span at 14-23 (RSPRTRRRRQ) shows a compositional bias: basic residues. Over residues 169–178 (EGTFFRDRPN) the composition is skewed to basic and acidic residues. Residues 310 to 323 (TVTETEESDLSGVD) are compositionally biased toward acidic residues. Residues 346–358 (TTASGVSTMQPGT) are compositionally biased toward polar residues. Position 1034–1041 (1034–1041 (GPPGTGKT)) interacts with ATP. Residues 1297–1388 (GPPEKDRQQQ…GTASDDEGLY (92 aa)) are disordered. Positions 1319–1332 (VSGSSVVSKGKGKA) are enriched in low complexity.

This sequence belongs to the AAA ATPase family. Interacts with PEX1; forming the PEX1-PEX6 AAA ATPase complex, which is composed of a heterohexamer formed by a trimer of PEX1-PEX6 dimers.

Its subcellular location is the cytoplasm. The protein resides in the cytosol. The protein localises to the peroxisome membrane. The catalysed reaction is ATP + H2O = ADP + phosphate + H(+). In terms of biological role, component of the PEX1-PEX6 AAA ATPase complex, a protein dislocase complex that mediates the ATP-dependent extraction of the PEX5 receptor from peroxisomal membranes, an essential step for PEX5 recycling. Specifically recognizes PEX5 monoubiquitinated at 'Cys-6', and pulls it out of the peroxisome lumen through the PEX2-PEX10-PEX12 retrotranslocation channel. Extraction by the PEX1-PEX6 AAA ATPase complex is accompanied by unfolding of the TPR repeats and release of bound cargo from PEX5. This Colletotrichum orbiculare (strain 104-T / ATCC 96160 / CBS 514.97 / LARS 414 / MAFF 240422) (Cucumber anthracnose fungus) protein is Peroxisomal ATPase PEX6 (PEX6).